Reading from the N-terminus, the 387-residue chain is MSVIKMTDLDLAGKRVFIRADLNVPVKDGKVTSDARIRASLPTIELALKQGAKVMVTSHLGRPTEGEYNEEFSLLPVVNYLKDKLSNPVRLVKDYLDGVDVAEGELVVLENVRFNKGEKKDDEILSKKYAALCDVFVMDAFGTAHRAQASTHGIGKFADVACAGPLLAAELDALGKALKEPARPMVAIVGGSKVSTKLTVLDSLSKIADQLIVGGGIANTFIAAQGHDVGKSLYEADLVDEAKRLLTTCNIPVPSDVRVATEFSETAPATLKSVNDVKADEQILDIGDASAQELAEILKNAKTILWNGPVGVFEFPNFRKGTEIVANAIADSEAFSIAGGGDTLAAIDLFGIADKISYISTGGGAFLEFVEGKVLPAVAMLEERAKK.

Substrate is bound by residues 21-23 (DLN), Arg-36, and 59-62 (HLGR). An N6-acetyllysine modification is found at Lys-84. 2 residues coordinate substrate: Arg-113 and Arg-146. Residues Lys-197, Glu-314, and 340–343 (GGDT) each bind ATP.

This sequence belongs to the phosphoglycerate kinase family. As to quaternary structure, monomer.

The protein localises to the cytoplasm. It catalyses the reaction (2R)-3-phosphoglycerate + ATP = (2R)-3-phospho-glyceroyl phosphate + ADP. It functions in the pathway carbohydrate degradation; glycolysis; pyruvate from D-glyceraldehyde 3-phosphate: step 2/5. This is Phosphoglycerate kinase (pgk) from Escherichia coli O157:H7.